Here is a 212-residue protein sequence, read N- to C-terminus: Probable GTP-binding protein EngB (212 aa).

Residues 38–210 (SLPEIAFVGK…KASLAKCIKP (173 aa)) enclose the EngB-type G domain. GTP-binding positions include 46–53 (GKSNVGKS), 73–77 (GRTRQ), 91–94 (DLPG), 158–161 (TKSD), and 189–191 (VSN). Mg(2+) contacts are provided by S53 and T75.

Belongs to the TRAFAC class TrmE-Era-EngA-EngB-Septin-like GTPase superfamily. EngB GTPase family. Mg(2+) serves as cofactor.

In terms of biological role, necessary for normal cell division and for the maintenance of normal septation. This chain is Probable GTP-binding protein EngB, found in Rickettsia peacockii (strain Rustic).